A 1030-amino-acid polypeptide reads, in one-letter code: Germ cell nuclear acidic protein (1030 aa).

Disordered regions lie at residues 1-59 (MADH…TEDT), 196-245 (EWNG…TQLA), 266-361 (KRLA…VSSI), 375-433 (TMES…EQFL), 457-594 (LKRS…DLTY), and 699-764 (KLGI…PVAS). Over residues 20 to 33 (APKDHPEKRNDQKT) the composition is skewed to basic and acidic residues. Composition is skewed to polar residues over residues 298-316 (EPNTLCSDSSETHNSTIHN) and 329-349 (ETSSEGELTPQKASSGSSTSG). The span at 505–516 (LRTNQTPLNSTR) shows a compositional bias: polar residues. Composition is skewed to basic and acidic residues over residues 541-553 (NHIDEDRWRKLID) and 578-594 (DSDKDKENKQKRGDLTY). Low complexity predominate over residues 720-748 (TPKTAPPKGTAPPKTSAPPKVSTPPKSTK).

Belongs to the serine-aspartate repeat-containing protein (SDr) family.

It is found in the cytoplasm. The protein resides in the chromosome. Functionally, may play a role in DNA-protein cross-links (DPCs) clearance, ensuring the genomic stability by protecting germ cells and early embryos from various sources of damage. Limits replication stress and DNA double-strand breaks. The protein is Germ cell nuclear acidic protein of Drosophila melanogaster (Fruit fly).